The following is a 460-amino-acid chain: 3-isopropylmalate dehydratase large subunit (460 aa).

[4Fe-4S] cluster-binding residues include C338, C398, and C401.

The protein belongs to the aconitase/IPM isomerase family. LeuC type 1 subfamily. Heterodimer of LeuC and LeuD. Requires [4Fe-4S] cluster as cofactor.

The catalysed reaction is (2R,3S)-3-isopropylmalate = (2S)-2-isopropylmalate. Its pathway is amino-acid biosynthesis; L-leucine biosynthesis; L-leucine from 3-methyl-2-oxobutanoate: step 2/4. Functionally, catalyzes the isomerization between 2-isopropylmalate and 3-isopropylmalate, via the formation of 2-isopropylmaleate. This Streptococcus thermophilus (strain ATCC BAA-250 / LMG 18311) protein is 3-isopropylmalate dehydratase large subunit.